The sequence spans 301 residues: UPF0282 protein Pcal_1546 (301 aa).

It belongs to the UPF0282 family.

The protein is UPF0282 protein Pcal_1546 of Pyrobaculum calidifontis (strain DSM 21063 / JCM 11548 / VA1).